A 138-amino-acid chain; its full sequence is Small ribosomal subunit protein uS9c (138 aa).

This sequence belongs to the universal ribosomal protein uS9 family.

The protein resides in the plastid. It is found in the chloroplast. This Trieres chinensis (Marine centric diatom) protein is Small ribosomal subunit protein uS9c (rps9).